The following is a 125-amino-acid chain: Large ribosomal subunit protein uL22 (125 aa).

The protein belongs to the universal ribosomal protein uL22 family. In terms of assembly, part of the 50S ribosomal subunit.

Functionally, this protein binds specifically to 23S rRNA; its binding is stimulated by other ribosomal proteins, e.g. L4, L17, and L20. It is important during the early stages of 50S assembly. It makes multiple contacts with different domains of the 23S rRNA in the assembled 50S subunit and ribosome. The globular domain of the protein is located near the polypeptide exit tunnel on the outside of the subunit, while an extended beta-hairpin is found that lines the wall of the exit tunnel in the center of the 70S ribosome. The polypeptide is Large ribosomal subunit protein uL22 (Erythrobacter litoralis (strain HTCC2594)).